Consider the following 380-residue polypeptide: Glucose-1-phosphate adenylyltransferase (380 aa).

Alpha-D-glucose 1-phosphate is bound by residues G164, 179–180 (EK), and S190.

The protein belongs to the bacterial/plant glucose-1-phosphate adenylyltransferase family. In terms of assembly, homotetramer.

It carries out the reaction alpha-D-glucose 1-phosphate + ATP + H(+) = ADP-alpha-D-glucose + diphosphate. It participates in glycan biosynthesis; glycogen biosynthesis. In terms of biological role, involved in the biosynthesis of ADP-glucose, a building block required for the elongation reactions to produce glycogen. Catalyzes the reaction between ATP and alpha-D-glucose 1-phosphate (G1P) to produce pyrophosphate and ADP-Glc. The chain is Glucose-1-phosphate adenylyltransferase from Lactococcus lactis subsp. lactis (strain IL1403) (Streptococcus lactis).